Here is a 414-residue protein sequence, read N- to C-terminus: Serine hydroxymethyltransferase (414 aa).

(6S)-5,6,7,8-tetrahydrofolate-binding positions include leucine 116 and 120-122; that span reads GHL. N6-(pyridoxal phosphate)lysine is present on lysine 224. (6S)-5,6,7,8-tetrahydrofolate-binding positions include glutamate 240 and 348–350; that span reads SPF.

It belongs to the SHMT family. As to quaternary structure, homodimer. Pyridoxal 5'-phosphate serves as cofactor.

The protein resides in the cytoplasm. The enzyme catalyses (6R)-5,10-methylene-5,6,7,8-tetrahydrofolate + glycine + H2O = (6S)-5,6,7,8-tetrahydrofolate + L-serine. It participates in one-carbon metabolism; tetrahydrofolate interconversion. It functions in the pathway amino-acid biosynthesis; glycine biosynthesis; glycine from L-serine: step 1/1. Its function is as follows. Catalyzes the reversible interconversion of serine and glycine with tetrahydrofolate (THF) serving as the one-carbon carrier. This reaction serves as the major source of one-carbon groups required for the biosynthesis of purines, thymidylate, methionine, and other important biomolecules. Also exhibits THF-independent aldolase activity toward beta-hydroxyamino acids, producing glycine and aldehydes, via a retro-aldol mechanism. The polypeptide is Serine hydroxymethyltransferase (Campylobacter concisus (strain 13826)).